A 998-amino-acid polypeptide reads, in one-letter code: UPF0182 protein AAur_2732 (998 aa).

A run of 7 helical transmembrane segments spans residues 18-38 (GALT…IFFA), 64-84 (IITF…AIRI), 115-135 (VVMI…AASQ), 168-188 (FLGF…IAGI), 211-231 (QIHI…NFWL), 260-280 (AILA…AIIG), and 287-307 (IGTA…PWVI). Disordered regions lie at residues 490–518 (GAPD…TFSG), 888–923 (LFGG…PTDA), and 971–998 (QARL…SPSS). Residues 496–509 (PNREQDRPAGREGG) show a composition bias toward basic and acidic residues. Over residues 908–919 (TSPPGTTPPPAG) the composition is skewed to pro residues. Residues 976–990 (ATPAPTATPGATPSA) are compositionally biased toward low complexity.

The protein belongs to the UPF0182 family.

The protein localises to the cell membrane. This Paenarthrobacter aurescens (strain TC1) protein is UPF0182 protein AAur_2732.